A 267-amino-acid chain; its full sequence is Glutamate racemase (267 aa).

Substrate is bound by residues 10-11 (DS) and 42-43 (YG). C73 acts as the Proton donor/acceptor in catalysis. 74-75 (NT) is a substrate binding site. C183 acts as the Proton donor/acceptor in catalysis. 184–185 (TH) is a binding site for substrate.

It belongs to the aspartate/glutamate racemases family.

It carries out the reaction L-glutamate = D-glutamate. Its pathway is cell wall biogenesis; peptidoglycan biosynthesis. Provides the (R)-glutamate required for cell wall biosynthesis. The sequence is that of Glutamate racemase from Lactobacillus helveticus (strain DPC 4571).